A 110-amino-acid polypeptide reads, in one-letter code: Transcription factor S (110 aa).

Positions 4, 7, 22, 25, 71, 74, 99, and 102 each coordinate Zn(2+). A TFIIS-type zinc finger spans residues 67 to 107; sequence TKVTCPKCGNDTAYWWEMQTRAGDEPSTIFYKCTKCGYTWR.

It belongs to the archaeal rpoM/eukaryotic RPA12/RPB9/RPC11 RNA polymerase family.

It is found in the chromosome. In terms of biological role, involved in transcriptional proofreading and fidelity. Induces RNA cleavage activity in RNA polymerase (RNAP). Stimulates transcription elongation by RNAP on both naked DNA and histone-bound DNA (chromatin), facilitating transcription through the histone barrier. Stimulation depends on transcript cleavage. In the presence of TFS, the cleavage activity of RNAP truncates RNA back to position +15 in a stepwise manner by releasing mainly dinucleotides from the 3'-end of the nascent RNA. The truncated RNAs are able to continue elongation. Misincorporation of nucleotides during elongation of transcription leads to arrested elongation complexes which are rescued by TFS-promoted removal of a dinucleotide from the 3'-end. TFS is able to induce a cleavage resynthesis cycle in stalled elongation complexes (resulting from the next missing nucleotide or a reduced incorporation rate of a wrong nucleotide) preventing misincorporation and enabling proofreading in a post-incorporation manner. Pausing of elongation complexes is the main determinant of TFS-induced RNA cleavage. In Thermococcus kodakarensis (strain ATCC BAA-918 / JCM 12380 / KOD1) (Pyrococcus kodakaraensis (strain KOD1)), this protein is Transcription factor S.